The sequence spans 524 residues: uncharacterized protein (524 aa).

Residues 1-21 (MLLRSVWYKLGSLLIILPLTG) form the signal peptide. Cys-22 carries the N-palmitoyl cysteine lipid modification. A lipid anchor (S-diacylglycerol cysteine) is attached at Cys-22.

The protein belongs to the MG067/MG068/MG395 family.

Its subcellular location is the cell membrane. This is an uncharacterized protein from Mycoplasma pneumoniae (strain ATCC 29342 / M129 / Subtype 1) (Mycoplasmoides pneumoniae).